The primary structure comprises 185 residues: MKNITDSFLCLGYWPSAGSFGFNTDILATNPINLSVVLGVLVFFGKGVLSDLLDNRKQKILRTIRNSEELREGAIEQLEKAQARLRKVETEADRFRVNGYSEIEREKLNLINSIYTTLEQLENYKNEAIHFEQQRVINQVRQRVLQQALQGALGTLKSCLNNELHLRTVSANIGMFGTMKEKITD.

Residues 27 to 49 (LATNPINLSVVLGVLVFFGKGVL) traverse the membrane as a helical segment.

It belongs to the ATPase B chain family. In terms of assembly, F-type ATPases have 2 components, F(1) - the catalytic core - and F(0) - the membrane proton channel. F(1) has five subunits: alpha(3), beta(3), gamma(1), delta(1), epsilon(1). F(0) has four main subunits: a(1), b(1), b'(1) and c(10-14). The alpha and beta chains form an alternating ring which encloses part of the gamma chain. F(1) is attached to F(0) by a central stalk formed by the gamma and epsilon chains, while a peripheral stalk is formed by the delta, b and b' chains.

The protein localises to the plastid. Its subcellular location is the chloroplast thylakoid membrane. Its function is as follows. F(1)F(0) ATP synthase produces ATP from ADP in the presence of a proton or sodium gradient. F-type ATPases consist of two structural domains, F(1) containing the extramembraneous catalytic core and F(0) containing the membrane proton channel, linked together by a central stalk and a peripheral stalk. During catalysis, ATP synthesis in the catalytic domain of F(1) is coupled via a rotary mechanism of the central stalk subunits to proton translocation. Component of the F(0) channel, it forms part of the peripheral stalk, linking F(1) to F(0). This is ATP synthase subunit b, chloroplastic from Glycine max (Soybean).